Reading from the N-terminus, the 993-residue chain is ATP-dependent DNA helicase MPH1 (993 aa).

The Helicase ATP-binding domain occupies 94–261 (IVHKSLFQNT…EVVNNLDISK (168 aa)). ATP is bound at residue 107-114 (IPTGMGKT). The short motif at 209-212 (DEAH) is the DEAH box element. The 149-residue stretch at 507-655 (KVERLHRQEQ…CIDYKKSDRI (149 aa)) folds into the Helicase C-terminal domain. Positions 530 to 551 (NDKLERSARRTGSSEEAQISGM) are disordered. Residues 539–551 (RTGSSEEAQISGM) show a composition bias toward polar residues. The interval 751–810 (LVTSNENPSKKRKIFKALDNLENDSTEEASSSLETEDEEVSDDNNVFIAEGQNGCQKDLE) is FKH1-binding region. A phosphothreonine mark is found at threonine 776 and threonine 785.

Belongs to the DEAD box helicase family. DEAH subfamily. FANCM sub-subfamily. As to quaternary structure, interacts with the MHF histone-fold complex composed of MHF1 and MHF2 to form the FANCM-MHF complex. Interacts with FHK1. Post-translationally, phosphorylation at both Thr-776 and Thr-785 is required for the interaction with FKH1.

The protein resides in the nucleus. The catalysed reaction is ATP + H2O = ADP + phosphate + H(+). In terms of biological role, ATP-dependent DNA helicase involved in DNA damage repair by homologous recombination and in genome maintenance. Capable of unwinding D-loops. Plays a role in limiting crossover recombinants during mitotic DNA double-strand break (DSB) repair. Prevents crossovers between ectopic sequences by removing substrates for MUS81-MMS4 or RAD1-RAD10 cleavage. Component of a FANCM-MHF complex which promotes gene conversion at blocked replication forks, probably by reversal of the stalled fork. Binds to flap-structured DNA but not to non-flap nicked DNA, and participates in Okazaki fragment processing by stimulating the endonuclease activities of FEN1 and DNA2. Involved in recombination donor preference during mating-type switching via interaction with FKH1. The sequence is that of ATP-dependent DNA helicase MPH1 from Saccharomyces cerevisiae (strain ATCC 204508 / S288c) (Baker's yeast).